The following is a 614-amino-acid chain: UvrABC system protein C (614 aa).

The region spanning 26-104 (NLPGVYKMLG…IKEYRPPYNV (79 aa)) is the GIY-YIG domain. A UVR domain is found at 215–250 (SDIHTALIEKMEASAEELDFEKAVFYRDQLSMLREV).

This sequence belongs to the UvrC family. In terms of assembly, interacts with UvrB in an incision complex.

The protein localises to the cytoplasm. Functionally, the UvrABC repair system catalyzes the recognition and processing of DNA lesions. UvrC both incises the 5' and 3' sides of the lesion. The N-terminal half is responsible for the 3' incision and the C-terminal half is responsible for the 5' incision. This is UvrABC system protein C from Psychrobacter cryohalolentis (strain ATCC BAA-1226 / DSM 17306 / VKM B-2378 / K5).